The following is a 271-amino-acid chain: Shikimate dehydrogenase (NADP(+)) (271 aa).

Shikimate-binding positions include 14 to 16 (SLS) and Thr-61. Lys-65 acts as the Proton acceptor in catalysis. Residues Asn-86 and Asp-101 each coordinate shikimate. Residues 125-129 (GAGGA) and Ile-212 contribute to the NADP(+) site. Tyr-214 contributes to the shikimate binding site. Residue Gly-235 coordinates NADP(+).

This sequence belongs to the shikimate dehydrogenase family. Homodimer.

It catalyses the reaction shikimate + NADP(+) = 3-dehydroshikimate + NADPH + H(+). The protein operates within metabolic intermediate biosynthesis; chorismate biosynthesis; chorismate from D-erythrose 4-phosphate and phosphoenolpyruvate: step 4/7. In terms of biological role, involved in the biosynthesis of the chorismate, which leads to the biosynthesis of aromatic amino acids. Catalyzes the reversible NADPH linked reduction of 3-dehydroshikimate (DHSA) to yield shikimate (SA). The polypeptide is Shikimate dehydrogenase (NADP(+)) (Clostridium perfringens (strain 13 / Type A)).